We begin with the raw amino-acid sequence, 105 residues long: MENIMDEKGQMILLFAFVVVIVVLTLSYVYAQNIIAGVESSRAMLAFPKEEIRNLEEIQKNFGGDSEVNSQIQTLCAKNGWVCYVGVDKVEFKNVEVDYCAGSDC.

Residues 13–35 (LLFAFVVVIVVLTLSYVYAQNII) form a helical membrane-spanning segment.

The protein resides in the membrane. This is an uncharacterized protein from Archaeoglobus fulgidus (strain ATCC 49558 / DSM 4304 / JCM 9628 / NBRC 100126 / VC-16).